Here is a 340-residue protein sequence, read N- to C-terminus: Ketol-acid reductoisomerase (NADP(+)) (340 aa).

One can recognise a KARI N-terminal Rossmann domain in the interval 2–182 (ANIYYENHAD…GCTRAGVIET (181 aa)). Residues 25–28 (FGSQ), Ser51, Ser53, and 83–86 (DTAQ) each bind NADP(+). His108 is a catalytic residue. Gly134 provides a ligand contact to NADP(+). Positions 183 to 328 (TFAEETETDL…RELRRMMPFV (146 aa)) constitute a KARI C-terminal knotted domain. Asp191, Glu195, Glu227, and Glu231 together coordinate Mg(2+). Substrate is bound at residue Ser252.

Belongs to the ketol-acid reductoisomerase family. Mg(2+) is required as a cofactor.

The catalysed reaction is (2R)-2,3-dihydroxy-3-methylbutanoate + NADP(+) = (2S)-2-acetolactate + NADPH + H(+). It carries out the reaction (2R,3R)-2,3-dihydroxy-3-methylpentanoate + NADP(+) = (S)-2-ethyl-2-hydroxy-3-oxobutanoate + NADPH + H(+). It functions in the pathway amino-acid biosynthesis; L-isoleucine biosynthesis; L-isoleucine from 2-oxobutanoate: step 2/4. It participates in amino-acid biosynthesis; L-valine biosynthesis; L-valine from pyruvate: step 2/4. Its function is as follows. Involved in the biosynthesis of branched-chain amino acids (BCAA). Catalyzes an alkyl-migration followed by a ketol-acid reduction of (S)-2-acetolactate (S2AL) to yield (R)-2,3-dihydroxy-isovalerate. In the isomerase reaction, S2AL is rearranged via a Mg-dependent methyl migration to produce 3-hydroxy-3-methyl-2-ketobutyrate (HMKB). In the reductase reaction, this 2-ketoacid undergoes a metal-dependent reduction by NADPH to yield (R)-2,3-dihydroxy-isovalerate. The chain is Ketol-acid reductoisomerase (NADP(+)) from Roseiflexus castenholzii (strain DSM 13941 / HLO8).